The sequence spans 156 residues: uncharacterized protein (156 aa).

Helical transmembrane passes span 6–26 (LIVL…PYFA), 34–54 (FWKF…HQMP), 68–88 (CARC…YPFI), 100–120 (WYLI…LIGL), and 129–149 (FITG…IFFE).

It localises to the cell membrane. This is an uncharacterized protein from Methanocaldococcus jannaschii (strain ATCC 43067 / DSM 2661 / JAL-1 / JCM 10045 / NBRC 100440) (Methanococcus jannaschii).